Reading from the N-terminus, the 409-residue chain is Nucleoprotein (409 aa).

Disordered stretches follow at residues 1 to 31 (MASG…GSSG), 44 to 84 (LNSP…KGGR), 164 to 196 (RSGR…EDDL), and 238 to 258 (VDQV…DDKM). Residues 15-31 (PVIKLGGPKPPKVGSSG) are compositionally biased toward low complexity. The interval 29–160 (SSGNVSWFQA…GNFRWDFIPL (132 aa)) is RNA-binding. The region spanning 31–156 (GNVSWFQAIK…GGPDGNFRWD (126 aa)) is the CoV N NTD domain. Residues 70–84 (YWRRQARFKPGKGGR) are compositionally biased toward basic residues. The span at 166-179 (GRSTAASSAASSRA) shows a compositional bias: low complexity. Composition is skewed to basic and acidic residues over residues 180-192 (PSRE…RSGS) and 247-258 (KGKEGNFGDDKM). Phosphoserine; by host is present on residues Ser-190 and Ser-192. One can recognise a CoV N CTD domain in the interval 215–331 (TKAKADEMAH…QCVDGVGTRP (117 aa)). Residues 226-333 (RYCKRTIPPN…VDGVGTRPKD (108 aa)) form a dimerization region. Cys-320 and Cys-323 are oxidised to a cystine. The interval 326 to 409 (GVGTRPKDDE…GDSALGENEL (84 aa)) is disordered. Residues 358-367 (QRPKKEKKPK) are compositionally biased toward basic residues. Positions 368-384 (KQDDEVDKALTSDEERN) are enriched in basic and acidic residues. At Thr-378 the chain carries Phosphothreonine; by host. Residue Ser-379 is modified to Phosphoserine; by host.

The protein belongs to the gammacoronavirus nucleocapsid protein family. Homooligomer. Both monomeric and oligomeric forms interact with RNA. Interacts with protein M. Interacts with NSP3; this interaction serves to tether the genome to the newly translated replicase-transcriptase complex at a very early stage of infection. In terms of processing, ADP-ribosylated. The ADP-ribosylation is retained in the virion during infection. Phosphorylated on serine and threonine residues.

It localises to the virion. It is found in the host endoplasmic reticulum-Golgi intermediate compartment. The protein localises to the host Golgi apparatus. Packages the positive strand viral genome RNA into a helical ribonucleocapsid (RNP) and plays a fundamental role during virion assembly through its interactions with the viral genome and membrane protein M. Plays an important role in enhancing the efficiency of subgenomic viral RNA transcription as well as viral replication. The protein is Nucleoprotein of Gallus gallus (Chicken).